The chain runs to 810 residues: DNA replication licensing factor mcm-6 (810 aa).

Positions 346 to 553 constitute an MCM domain; that stretch reads IEKNIVDSLF…VTDYAIARRI (208 aa). The ATP site is built by Ser-400, Thr-401, Ala-402, Lys-403, Ser-404, and Asn-505. The Arginine finger motif lies at 529-532; that stretch reads SRFD. Positions 622 and 625 each coordinate ADP. A disordered region spans residues 685 to 705; that stretch reads KENQGGDDDMEHDGEKDETAK.

Belongs to the MCM family. As to quaternary structure, component of the mcm2-7 complex. The complex forms a toroidal hexameric ring with the proposed subunit order mcm2-mcm6-mcm4-mcm7-mcm3-mcm5 (By simililarity).

Its subcellular location is the nucleus. It catalyses the reaction ATP + H2O = ADP + phosphate + H(+). Acts as a component of the MCM2-7 complex (MCM complex) which is the replicative helicase essential for 'once per cell cycle' DNA replication initiation and elongation in eukaryotic cells. Core component of CDC45-MCM-GINS (CMG) helicase, the molecular machine that unwinds template DNA during replication, and around which the replisome is built. The active ATPase sites in the MCM2-7 ring are formed through the interaction surfaces of two neighboring subunits such that a critical structure of a conserved arginine finger motif is provided in trans relative to the ATP-binding site of the Walker A box of the adjacent subunit. The six ATPase active sites, however, are likely to contribute differentially to the complex helicase activity. The polypeptide is DNA replication licensing factor mcm-6 (Caenorhabditis briggsae).